The sequence spans 138 residues: Thyrotropin subunit beta (138 aa).

A signal peptide spans 1–20; sequence MTATFLMSLLFGLAFGQTMS. 6 disulfides stabilise this stretch: Cys-22–Cys-72, Cys-36–Cys-87, Cys-39–Cys-125, Cys-47–Cys-103, Cys-51–Cys-105, and Cys-108–Cys-115. Asn-43 is a glycosylation site (N-linked (GlcNAc...) asparagine). The propeptide occupies 133-138; the sequence is LVGFPV.

This sequence belongs to the glycoprotein hormones subunit beta family. Heterodimer of a common alpha chain and a unique beta chain which confers biological specificity to thyrotropin, lutropin, follitropin and gonadotropin.

Its subcellular location is the secreted. Functionally, indispensable for the control of thyroid structure and metabolism. In Monodelphis domestica (Gray short-tailed opossum), this protein is Thyrotropin subunit beta (TSHB).